Here is a 348-residue protein sequence, read N- to C-terminus: Selenide, water dikinase (348 aa).

Cys-17 is a catalytic residue. Residues Lys-20 and 47 to 49 (RAD) contribute to the ATP site. Mg(2+) is bound at residue Asp-50. ATP-binding positions include Asp-67, Asp-90, and 138–140 (GHT). A Mg(2+)-binding site is contributed by Asp-90. Residue Asp-226 coordinates Mg(2+).

Belongs to the selenophosphate synthase 1 family. Class I subfamily. In terms of assembly, homodimer. Mg(2+) is required as a cofactor.

The catalysed reaction is hydrogenselenide + ATP + H2O = selenophosphate + AMP + phosphate + 2 H(+). Synthesizes selenophosphate from selenide and ATP. In Pelobacter propionicus (strain DSM 2379 / NBRC 103807 / OttBd1), this protein is Selenide, water dikinase.